The sequence spans 432 residues: Polyadenylate-binding protein RBP47C (432 aa).

A disordered region spans residues 1–55; sequence MADVKIQSESESSDSHPVVDNQPPPPPPPPQQPAKEEENQPKTSPTPPPHWMRYP. Residues 22–32 are compositionally biased toward pro residues; the sequence is QPPPPPPPPQQ. 2 RRM domains span residues 101 to 183 and 197 to 276; these read KTIW…WASF and LSIF…PATP. The disordered stretch occupies residues 271-293; that stretch reads IGPATPRKTNGYQQQGGYMPNGT. Positions 277-286 are enriched in polar residues; the sequence is RKTNGYQQQG. Positions 304–376 constitute an RRM 3 domain; it reads TTIFVGGLDS…QTVRLSWGRN (73 aa).

This sequence belongs to the polyadenylate-binding RBP47 family. As to quaternary structure, interacts with the poly(A) tail of mRNA in nucleus. In terms of tissue distribution, expressed in leaves, stems, flowers, and seedlings.

It is found in the nucleus. Its subcellular location is the cytoplasmic granule. In terms of biological role, heterogeneous nuclear ribonucleoprotein (hnRNP)-protein binding the poly(A) tail of mRNA and probably involved in some steps of pre-mRNA maturation. The polypeptide is Polyadenylate-binding protein RBP47C (RBP47C) (Arabidopsis thaliana (Mouse-ear cress)).